A 557-amino-acid chain; its full sequence is Formate--tetrahydrofolate ligase (557 aa).

65–72 (TPAGEGKT) provides a ligand contact to ATP.

This sequence belongs to the formate--tetrahydrofolate ligase family.

The enzyme catalyses (6S)-5,6,7,8-tetrahydrofolate + formate + ATP = (6R)-10-formyltetrahydrofolate + ADP + phosphate. The protein operates within one-carbon metabolism; tetrahydrofolate interconversion. The polypeptide is Formate--tetrahydrofolate ligase (Methylorubrum populi (strain ATCC BAA-705 / NCIMB 13946 / BJ001) (Methylobacterium populi)).